The chain runs to 228 residues: Thermonuclease (228 aa).

Residues 1–23 (MTEYLLSAGICMAIVSILLIGMA) form the signal peptide. Residues 24-60 (ISNVSKEQYAKRFFFFATSCLVLTLVVASSLSSSANA) constitute a propeptide that is removed on maturation. Asp100 is a binding site for Ca(2+). Arg114 is a catalytic residue. Asp119 and Thr120 together coordinate Ca(2+). Active-site residues include Glu122 and Arg166.

Belongs to the thermonuclease family. The cofactor is Ca(2+).

Its subcellular location is the secreted. The catalysed reaction is Endonucleolytic cleavage to nucleoside 3'-phosphates and 3'-phosphooligonucleotide end-products.. Functionally, enzyme that catalyzes the hydrolysis of both DNA and RNA at the 5' position of the phosphodiester bond. This is Thermonuclease (nuc) from Staphylococcus aureus (strain MRSA252).